Consider the following 301-residue polypeptide: Ribonuclease Z (301 aa).

Zn(2+)-binding residues include histidine 60, histidine 62, aspartate 64, histidine 65, histidine 137, aspartate 207, and histidine 265. The active-site Proton acceptor is the aspartate 64.

Belongs to the RNase Z family. In terms of assembly, homodimer. Zn(2+) serves as cofactor.

It catalyses the reaction Endonucleolytic cleavage of RNA, removing extra 3' nucleotides from tRNA precursor, generating 3' termini of tRNAs. A 3'-hydroxy group is left at the tRNA terminus and a 5'-phosphoryl group is left at the trailer molecule.. Functionally, zinc phosphodiesterase, which displays some tRNA 3'-processing endonuclease activity. Probably involved in tRNA maturation, by removing a 3'-trailer from precursor tRNA. The polypeptide is Ribonuclease Z (Exiguobacterium sibiricum (strain DSM 17290 / CCUG 55495 / CIP 109462 / JCM 13490 / 255-15)).